Reading from the N-terminus, the 410-residue chain is LL-diaminopimelate aminotransferase (410 aa).

Tyr-15 and Gly-42 together coordinate substrate. Residues Tyr-72, 108 to 109 (SK), Tyr-132, Asn-187, Tyr-218, and 246 to 248 (SFS) contribute to the pyridoxal 5'-phosphate site. 3 residues coordinate substrate: Lys-109, Tyr-132, and Asn-187. Lys-249 carries the N6-(pyridoxal phosphate)lysine modification. 2 residues coordinate pyridoxal 5'-phosphate: Arg-257 and Asn-292. The substrate site is built by Asn-292 and Arg-388.

It belongs to the class-I pyridoxal-phosphate-dependent aminotransferase family. LL-diaminopimelate aminotransferase subfamily. As to quaternary structure, homodimer. Pyridoxal 5'-phosphate is required as a cofactor.

The enzyme catalyses (2S,6S)-2,6-diaminopimelate + 2-oxoglutarate = (S)-2,3,4,5-tetrahydrodipicolinate + L-glutamate + H2O + H(+). The protein operates within amino-acid biosynthesis; L-lysine biosynthesis via DAP pathway; LL-2,6-diaminopimelate from (S)-tetrahydrodipicolinate (aminotransferase route): step 1/1. Functionally, involved in the synthesis of meso-diaminopimelate (m-DAP or DL-DAP), required for both lysine and peptidoglycan biosynthesis. Catalyzes the direct conversion of tetrahydrodipicolinate to LL-diaminopimelate. The chain is LL-diaminopimelate aminotransferase from Geotalea uraniireducens (strain Rf4) (Geobacter uraniireducens).